The following is a 336-amino-acid chain: Biotin synthase (336 aa).

Residues 54-281 (NAIQLSTLLS…KAMVRLSAGR (228 aa)) enclose the Radical SAM core domain. [4Fe-4S] cluster-binding residues include Cys69, Cys73, and Cys76. [2Fe-2S] cluster is bound by residues Cys113, Cys144, Cys204, and Arg276.

Belongs to the radical SAM superfamily. Biotin synthase family. In terms of assembly, homodimer. The cofactor is [4Fe-4S] cluster. [2Fe-2S] cluster is required as a cofactor.

It catalyses the reaction (4R,5S)-dethiobiotin + (sulfur carrier)-SH + 2 reduced [2Fe-2S]-[ferredoxin] + 2 S-adenosyl-L-methionine = (sulfur carrier)-H + biotin + 2 5'-deoxyadenosine + 2 L-methionine + 2 oxidized [2Fe-2S]-[ferredoxin]. The protein operates within cofactor biosynthesis; biotin biosynthesis; biotin from 7,8-diaminononanoate: step 2/2. In terms of biological role, catalyzes the conversion of dethiobiotin (DTB) to biotin by the insertion of a sulfur atom into dethiobiotin via a radical-based mechanism. The protein is Biotin synthase of Burkholderia pseudomallei (strain 1106a).